The chain runs to 228 residues: N-(5'-phosphoribosyl)anthranilate isomerase (228 aa).

This sequence belongs to the TrpF family.

The catalysed reaction is N-(5-phospho-beta-D-ribosyl)anthranilate = 1-(2-carboxyphenylamino)-1-deoxy-D-ribulose 5-phosphate. Its pathway is amino-acid biosynthesis; L-tryptophan biosynthesis; L-tryptophan from chorismate: step 3/5. This Azorhizobium caulinodans (strain ATCC 43989 / DSM 5975 / JCM 20966 / LMG 6465 / NBRC 14845 / NCIMB 13405 / ORS 571) protein is N-(5'-phosphoribosyl)anthranilate isomerase.